Reading from the N-terminus, the 149-residue chain is NADH-quinone oxidoreductase subunit A (149 aa).

Transmembrane regions (helical) follow at residues 16–36 (FAVF…GAFF), 68–88 (FYLV…LYAW), and 98–118 (LGFI…FYLV).

It belongs to the complex I subunit 3 family. In terms of assembly, NDH-1 is composed of 13 different subunits. Subunits NuoA, H, J, K, L, M, N constitute the membrane sector of the complex.

The protein localises to the cell inner membrane. The enzyme catalyses a quinone + NADH + 5 H(+)(in) = a quinol + NAD(+) + 4 H(+)(out). In terms of biological role, NDH-1 shuttles electrons from NADH, via FMN and iron-sulfur (Fe-S) centers, to quinones in the respiratory chain. The immediate electron acceptor for the enzyme in this species is believed to be ubiquinone. Couples the redox reaction to proton translocation (for every two electrons transferred, four hydrogen ions are translocated across the cytoplasmic membrane), and thus conserves the redox energy in a proton gradient. This Photorhabdus laumondii subsp. laumondii (strain DSM 15139 / CIP 105565 / TT01) (Photorhabdus luminescens subsp. laumondii) protein is NADH-quinone oxidoreductase subunit A.